Consider the following 648-residue polypeptide: MKTNIKVFTSTGELTTLGRELGKGGEGAVYDIEEFVDSVAKIYHTPPPALKQDKLAFMAATADAQLLNYVAWPQATLHGGRGGKVIGFMMPKVSGKEPIHMIYSPAHRRQSYPHCAWDFLLYVARNIASSFATVHEHGHVVGDVNQNSFMVGRDSKVVLIDSDSFQINANGTLHLCEVGVSHFTPPELQTLPSFVGFERTENHDNFGLALLIFHVLFGGRHPYSGVPLISDAGNALETDITHFRYAYASDNQRRGLKPPPRSIPLSMLPSDVEAMFQQAFTESGVATGRPTAKAWVAALDSLRQQLKKCIVSAMHVYPAHLTDCPWCALDNQGVIYFIDLGEEVITTGGNFVLAKVWAMVMASVAPPALQLPLPDHFQPTGRPLPLGLLRREYIILLEIALSALSLLLCGLQAEPRYIILVPVLAAIWIIGSLTSKAYKAEVQQRREAFNRAKMDYDHLVRQIQQVGGLEGFIAKRTMLEKMKDEILGLPEEEKRALAALHDTARERQKQKFLEGFFIDVASIPGVGPARKAALRSFGIETAADVTRRGVKQVKGFGDHLTQAVIDWKASCERRFVFRPNEAITPADRQAVMAKMTAKRHRLESALTVGATELQRFRLHAPARTMPLMEPLRQAAEKLAQAQADLSRC.

The Protein kinase domain occupies 15 to 302 (TTLGRELGKG…KAWVAALDSL (288 aa)). Residues 21-29 (LGKGGEGAV) and lysine 41 contribute to the ATP site. The active-site Proton acceptor is the aspartate 143.

Post-translationally, autophosphorylated. Dephosphorylated by PphC.

Functionally, probable serine/threonine kinase. This chain is Protein kinase YegI (yegI), found in Escherichia coli (strain K12).